The chain runs to 162 residues: Cadmium metallothionein (162 aa).

A propeptide spanning residues 1-2 (MD) is cleaved from the precursor.

Functionally, the metallothioneins are involved in the cellular sequestration of toxic metal ions. The protein is Cadmium metallothionein (MTT1) of Tetrahymena thermophila.